Reading from the N-terminus, the 491-residue chain is Argininosuccinate lyase (491 aa).

This sequence belongs to the lyase 1 family. Argininosuccinate lyase subfamily.

The protein resides in the cytoplasm. It carries out the reaction 2-(N(omega)-L-arginino)succinate = fumarate + L-arginine. It functions in the pathway amino-acid biosynthesis; L-arginine biosynthesis; L-arginine from L-ornithine and carbamoyl phosphate: step 3/3. The chain is Argininosuccinate lyase from Methanosarcina mazei (strain ATCC BAA-159 / DSM 3647 / Goe1 / Go1 / JCM 11833 / OCM 88) (Methanosarcina frisia).